We begin with the raw amino-acid sequence, 165 residues long: Cytochrome c-type biogenesis protein CcmE (165 aa).

The Cytoplasmic segment spans residues 1–7; the sequence is MTRKQKR. A helical; Signal-anchor for type II membrane protein membrane pass occupies residues 8–28; sequence LAVIAGGMGFIIAAVLLVMFA. The Periplasmic segment spans residues 29–165; sequence FSQSVAYFYM…GQGQEAKATR (137 aa). Heme contacts are provided by His124 and Tyr128. The span at 144–154 shows a compositional bias: low complexity; the sequence is QDGQGAQSQAG. Residues 144–165 are disordered; the sequence is QDGQGAQSQAGQGQGQEAKATR.

It belongs to the CcmE/CycJ family.

The protein localises to the cell inner membrane. Functionally, heme chaperone required for the biogenesis of c-type cytochromes. Transiently binds heme delivered by CcmC and transfers the heme to apo-cytochromes in a process facilitated by CcmF and CcmH. The polypeptide is Cytochrome c-type biogenesis protein CcmE (Rhizobium etli (strain CIAT 652)).